An 85-amino-acid polypeptide reads, in one-letter code: Cell division topological specificity factor (85 aa).

Belongs to the MinE family.

Its function is as follows. Prevents the cell division inhibition by proteins MinC and MinD at internal division sites while permitting inhibition at polar sites. This ensures cell division at the proper site by restricting the formation of a division septum at the midpoint of the long axis of the cell. This is Cell division topological specificity factor from Shewanella oneidensis (strain ATCC 700550 / JCM 31522 / CIP 106686 / LMG 19005 / NCIMB 14063 / MR-1).